Reading from the N-terminus, the 366-residue chain is Cobalt-precorrin-5B C(1)-methyltransferase (366 aa).

Belongs to the CbiD family.

It catalyses the reaction Co-precorrin-5B + S-adenosyl-L-methionine = Co-precorrin-6A + S-adenosyl-L-homocysteine. It participates in cofactor biosynthesis; adenosylcobalamin biosynthesis; cob(II)yrinate a,c-diamide from sirohydrochlorin (anaerobic route): step 6/10. Its function is as follows. Catalyzes the methylation of C-1 in cobalt-precorrin-5B to form cobalt-precorrin-6A. This Paraburkholderia phymatum (strain DSM 17167 / CIP 108236 / LMG 21445 / STM815) (Burkholderia phymatum) protein is Cobalt-precorrin-5B C(1)-methyltransferase.